A 176-amino-acid polypeptide reads, in one-letter code: MADIAQKIRNTREDFEERIVEIRRTTKVTKGGKNLSFRVLAVVGNRNGKVGVGVGKAREVPDAIRKALSAARRNVFEVPIYNGTIPHEIVGRQDAAKVLLKPAAPGTGIISNGTVRAVVELAGIHNILTKTSGSTNPVVLAQATVNGLKNLLSLEKIAQLRDITPQEVIYGVKKEG.

Positions 15–78 (FEERIVEIRR…SAARRNVFEV (64 aa)) constitute an S5 DRBM domain.

It belongs to the universal ribosomal protein uS5 family. In terms of assembly, part of the 30S ribosomal subunit. Contacts proteins S4 and S8.

Its function is as follows. With S4 and S12 plays an important role in translational accuracy. In terms of biological role, located at the back of the 30S subunit body where it stabilizes the conformation of the head with respect to the body. In Thermosipho africanus (strain TCF52B), this protein is Small ribosomal subunit protein uS5.